Here is a 157-residue protein sequence, read N- to C-terminus: Endoribonuclease YbeY (157 aa).

3 residues coordinate Zn(2+): histidine 114, histidine 118, and histidine 124.

This sequence belongs to the endoribonuclease YbeY family. Zn(2+) serves as cofactor.

The protein localises to the cytoplasm. Functionally, single strand-specific metallo-endoribonuclease involved in late-stage 70S ribosome quality control and in maturation of the 3' terminus of the 16S rRNA. This chain is Endoribonuclease YbeY, found in Salmonella typhimurium (strain LT2 / SGSC1412 / ATCC 700720).